We begin with the raw amino-acid sequence, 482 residues long: Auxin transporter-like protein 4 (482 aa).

Residues 1–59 (MLSQNQAEEAIVTNMNETEQEGGSSLEEIAEDQSMFNFKSFLWHGGSVWDAWFSCASNQ) lie on the Cytoplasmic side of the membrane. The chain crosses the membrane as a helical span at residues 60-77 (VAQVLLTLPYSFSQLGMV). Residues 78-79 (SG) lie on the Extracellular side of the membrane. The helical transmembrane segment at 80 to 100 (IVFQIFYGLIGSWTAYLISVL) threads the bilayer. At 101–135 (YVEYRARKEKENVNFKNHVIQWFEVLDGLLGRYWK) the chain is on the cytoplasmic side. The helical transmembrane segment at 136–156 (ALGLAFNCTFLLFGSVIQLIA) threads the bilayer. Residues 157–172 (CASNIYYINDKLDKRT) lie on the Extracellular side of the membrane. The chain crosses the membrane as a helical span at residues 173–193 (WTYIFGACCATTVFIPSFHNY). Topologically, residues 194 to 196 (RIW) are cytoplasmic. A helical transmembrane segment spans residues 197 to 217 (SFLGLGMTTYTAWYMAIAAIV). At 218-232 (NGQIENVVHSGPTKL) the chain is on the extracellular side. The helical transmembrane segment at 233-253 (VLYFTGATNILYTFGGHAVTV) threads the bilayer. Residues 254–266 (EIMHAMWKPQKFK) are Cytoplasmic-facing. The helical transmembrane segment at 267–287 (YIYFLATLYVFTLTIPSAVAV) threads the bilayer. Over 288–314 (YWAFGDELLNHSNAFSLLPKNGFRDAA) the chain is Extracellular. Asn297 is a glycosylation site (N-linked (GlcNAc...) asparagine). The chain crosses the membrane as a helical span at residues 315-335 (VILMLIHQFITFGFACTPLYF). At 336 to 356 (VWEKVIGMHDTKSICLRALVR) the chain is on the cytoplasmic side. A helical transmembrane segment spans residues 357–377 (LPVVIPIWFLAIIFPFFGPIN). Position 378 (Ser378) is a topological domain, extracellular. A helical transmembrane segment spans residues 379–399 (AVGALLVTFTVYIIPALAHML). Residues 400-422 (TYRTASARKNAVEKPPSFLPSWT) are Cytoplasmic-facing. Residues 423–443 (AVYVLNAFIVVWVLVVGFGFG) traverse the membrane as a helical segment. The Extracellular segment spans residues 444–482 (GWASMTNFIRQIDTFGLFAKCYQCKPPTPPQAPSPHARH).

Belongs to the amino acid/polyamine transporter 2 family. Amino acid/auxin permease (AAAP) (TC 2.A.18.1) subfamily. As to expression, shoots and roots of nodulating plants, at low levels.

The protein resides in the cell membrane. Carrier protein involved in proton-driven auxin influx. Mediates the formation of auxin gradient from developing leaves (site of auxin biosynthesis) to tips by contributing to the loading of auxin in vascular tissues and facilitating acropetal (base to tip) auxin transport within inner tissues of the root apex, and basipetal (tip to base) auxin transport within outer tissues of the root apex. May be involved in lateral roots and nodules formation. This chain is Auxin transporter-like protein 4 (LAX4), found in Medicago truncatula (Barrel medic).